A 261-amino-acid chain; its full sequence is Neurexophilin-2 (261 aa).

A signal peptide spans 1 to 22 (MSLRPLPLLVVPGLLQLLFCDS). The interval 23–87 (EEVIHNTESV…WDWLANITEI (65 aa)) is II. N-linked (GlcNAc...) asparagine glycosylation is found at Asn83, Asn136, Asn146, and Asn152. The interval 88–166 (QEQLARTKRR…LVPPSKVVEF (79 aa)) is III. Positions 167–175 (EISPQSTLE) are IV (linker domain). Positions 176–261 (TKESKSFNCH…HSETPYLSFG (86 aa)) are v (Cys-rich).

The protein belongs to the neurexophilin family. Post-translationally, may be proteolytically processed at the boundary between the N-terminal non-conserved and the central conserved domain in neuron-like cells.

The protein localises to the secreted. May be signaling molecules that resemble neuropeptides and that act by binding to alpha-neurexins and possibly other receptors. The sequence is that of Neurexophilin-2 (Nxph2) from Mus musculus (Mouse).